Reading from the N-terminus, the 309-residue chain is Malate dehydrogenase (309 aa).

Residues 9 to 14 and D33 contribute to the NAD(+) site; that span reads GAGFVG. Residues R82 and R88 each contribute to the substrate site. NAD(+) contacts are provided by residues N95 and 118–120; that span reads VNN. Residues N120 and R151 each contribute to the substrate site. H175 acts as the Proton acceptor in catalysis.

It belongs to the LDH/MDH superfamily. MDH type 3 family.

It catalyses the reaction (S)-malate + NAD(+) = oxaloacetate + NADH + H(+). In terms of biological role, catalyzes the reversible oxidation of malate to oxaloacetate. The chain is Malate dehydrogenase from Roseiflexus castenholzii (strain DSM 13941 / HLO8).